Here is a 352-residue protein sequence, read N- to C-terminus: Protein RecA (352 aa).

67–74 provides a ligand contact to ATP; the sequence is GPESSGKT.

The protein belongs to the RecA family.

It is found in the cytoplasm. Functionally, can catalyze the hydrolysis of ATP in the presence of single-stranded DNA, the ATP-dependent uptake of single-stranded DNA by duplex DNA, and the ATP-dependent hybridization of homologous single-stranded DNAs. It interacts with LexA causing its activation and leading to its autocatalytic cleavage. The polypeptide is Protein RecA (Chlamydia trachomatis serovar D (strain ATCC VR-885 / DSM 19411 / UW-3/Cx)).